The primary structure comprises 950 residues: ABC transporter A family member 9 (950 aa).

Transmembrane regions (helical) follow at residues 31–51 (ATCL…SIEE), 223–243 (IISA…MFGF), 276–296 (WLIW…LFGM), 308–328 (FVLV…LAFA), 342–362 (VGFL…AGFP), and 426–446 (IWLV…DNII). In terms of domain architecture, ABC transporter spans 520–765 (VQIHGLAKTY…FGTGFVATVS (246 aa)). Residue 566-573 (GPNGAGKT) coordinates ATP.

This sequence belongs to the ABC transporter superfamily. ABCA family. CPR flippase (TC 3.A.1.211) subfamily. In terms of tissue distribution, highly expressed in siliques. Detected in seedlings, rosette leaves, stems and flowers.

The protein localises to the endoplasmic reticulum membrane. Functionally, mediates the transport of acyl-CoAs and/or free fatty acids to the endoplasmic reticulum. Has no effect on the selectivity of fatty acid incorporation into triacylglycerol or further desaturation steps. This chain is ABC transporter A family member 9 (ABCA9), found in Arabidopsis thaliana (Mouse-ear cress).